Reading from the N-terminus, the 611-residue chain is Zinc metalloproteinase-disintegrin-like ohanin (611 aa).

The N-terminal stretch at 1-20 (MIQVLLVTICLVVFPYQGSS) is a signal peptide. Residues 21–187 (IILESGKVND…WESDEPIEKI (167 aa)) constitute a propeptide that is removed on maturation. Positions 198–393 (KYLELYIVAD…DTPQCLINKP (196 aa)) constitute a Peptidase M12B domain. N-linked (GlcNAc...) asparagine glycans are attached at residues Asn217 and Asn260. Cystine bridges form between Cys307–Cys388, Cys347–Cys372, and Cys349–Cys354. Residue His332 coordinates Zn(2+). The active site involves Glu333. Zn(2+) is bound by residues His336 and His342. Asn395 carries N-linked (GlcNAc...) asparagine glycosylation. The region spanning 401–487 (NAVCGNYVEE…ECPMDRFHKN (87 aa)) is the Disintegrin domain. Disulfide bonds link Cys404–Cys433, Cys415–Cys428, Cys417–Cys423, Cys427–Cys450, Cys441–Cys447, Cys446–Cys472, Cys459–Cys479, Cys466–Cys498, Cys491–Cys503, Cys510–Cys560, Cys525–Cys578, Cys538–Cys548, Cys555–Cys603, and Cys597–Cys608. The D/ECD-tripeptide signature appears at 465–467 (ECD). A glycan (N-linked (GlcNAc...) asparagine) is linked at Asn528.

It belongs to the venom metalloproteinase (M12B) family. P-III subfamily. P-IIIa sub-subfamily. As to quaternary structure, monomer. It depends on Zn(2+) as a cofactor. As to expression, expressed by the venom gland.

Its subcellular location is the secreted. Inhibited by EDTA, but not by PMSF. Its function is as follows. Snake venom zinc metalloproteinase that has hemorrhagic activity. Inhibits ADP-, TMVA- and stejnulxin-induced platelet aggregation in a dose-dependent manner (on washed platelet, but not on platelet rich plasm). Also specifically degrades alpha-chain of fibrinogen (FGA). This is Zinc metalloproteinase-disintegrin-like ohanin from Ophiophagus hannah (King cobra).